Reading from the N-terminus, the 302-residue chain is MPDIANTAPALQTGTLDWVGMGEIELPFIFESHGITPVTVNAKARAFVNLHKEDAKGIHMSRLFLALDTLSTEQQVNPQTLAQALDFFISSHEGLSDKALIEFKFELPLRRKSLLSDKAGWKSYPVILTSTIEQGVINYELSVDVTYSSTCPCSAALARQLIQNAFAEKFSQETLSQKEALEWLGTTQGIVATPHSQRSIANVKVKLDSNITQFDVVNLINTIEDELKTPVQAAVKREDEQEFARLNGQNLMFCEDAARKIKALLETQQYSDYWLQINHYESLHAHDALAIAVKGVAGGYRA.

The protein belongs to the GTP cyclohydrolase IV family.

The enzyme catalyses GTP + H2O = 7,8-dihydroneopterin 3'-triphosphate + formate + H(+). The protein operates within cofactor biosynthesis; 7,8-dihydroneopterin triphosphate biosynthesis; 7,8-dihydroneopterin triphosphate from GTP: step 1/1. In terms of biological role, converts GTP to 7,8-dihydroneopterin triphosphate. This Pseudoalteromonas translucida (strain TAC 125) protein is GTP cyclohydrolase FolE2.